We begin with the raw amino-acid sequence, 361 residues long: MGGTINAAIKQKFENEIFDLACFGENQVLLGFSNGRVSSYQYDVAQISLVEQWSTKRHKKSCRNISVNESGTEFISVGSDGVLKIADTSTGRVSSKWIVDKNKEISPYSVVQWIENDMVFATGDDNGCVSVWDKRTEGGIIHTHNDHIDYISSISPFEERYFVATSGDGVLSVIDARNFKKPILSEEQDEEMTCGAFTRDQHSKKKFAVGTASGVITLFTKGDWGDHTDRILSPIRSHDFSIETITRADSDSLYVGGSDGCIRLLHILPNKYERIIGQHSSRSTVDAVDVTTEGNFLVSCSGTELAFWPVDQKEGDESSSSDNLDSDEDSSSDSEFSSPKKKKKVGNQGKKPLGTDFFDGL.

6 WD repeats span residues 57 to 96 (RHKKSCRNISVNESGTEFISVGSDGVLKIADTSTGRVSSK), 103 to 142 (KEISPYSVVQWIENDMVFATGDDNGCVSVWDKRTEGGIIH), 146 to 184 (DHIDYISSISPFEERYFVATSGDGVLSVIDARNFKKPIL), 187 to 229 (EQDE…DHTD), 237 to 275 (SHDFSIETITRADSDSLYVGGSDGCIRLLHILPNKYERI), and 280 to 318 (SSRSTVDAVDVTTEGNFLVSCSGTELAFWPVDQKEGDES). Positions 311-361 (DQKEGDESSSSDNLDSDEDSSSDSEFSSPKKKKKVGNQGKKPLGTDFFDGL) are disordered.

It is found in the nucleus. The protein localises to the nucleolus. This is an uncharacterized protein from Schizosaccharomyces pombe (strain 972 / ATCC 24843) (Fission yeast).